Consider the following 409-residue polypeptide: Arginine deiminase (409 aa).

C397 (amidino-cysteine intermediate) is an active-site residue.

The protein belongs to the arginine deiminase family.

It localises to the cytoplasm. The enzyme catalyses L-arginine + H2O = L-citrulline + NH4(+). The protein operates within amino-acid degradation; L-arginine degradation via ADI pathway; carbamoyl phosphate from L-arginine: step 1/2. The sequence is that of Arginine deiminase (arcA) from Metamycoplasma hominis (Mycoplasma hominis).